Here is a 298-residue protein sequence, read N- to C-terminus: Glycine--tRNA ligase alpha subunit (298 aa).

Belongs to the class-II aminoacyl-tRNA synthetase family. In terms of assembly, tetramer of two alpha and two beta subunits.

It is found in the cytoplasm. The catalysed reaction is tRNA(Gly) + glycine + ATP = glycyl-tRNA(Gly) + AMP + diphosphate. The chain is Glycine--tRNA ligase alpha subunit (glyQ) from Helicobacter pylori (strain J99 / ATCC 700824) (Campylobacter pylori J99).